The chain runs to 511 residues: ATP synthase subunit beta, mitochondrial (511 aa).

Residues 1–33 (MVLPRLYTATSRAAFKAAKQSAPLLSTSWKRCM) constitute a mitochondrion transit peptide. The residue at position 112 (T112) is a Phosphothreonine. 190–197 (GGAGVGKT) contacts ATP. T237 carries the post-translational modification Phosphothreonine. Position 373 is a phosphoserine (S373).

The protein belongs to the ATPase alpha/beta chains family. As to quaternary structure, F-type ATPases have 2 components, CF(1) - the catalytic core - and CF(0) - the membrane proton channel. CF(1) has five subunits: alpha(3), beta(3), gamma(1), delta(1), epsilon(1). CF(0) has three main subunits: a, b and c.

The protein resides in the mitochondrion. Its subcellular location is the mitochondrion inner membrane. The catalysed reaction is ATP + H2O + 4 H(+)(in) = ADP + phosphate + 5 H(+)(out). Mitochondrial membrane ATP synthase (F(1)F(0) ATP synthase or Complex V) produces ATP from ADP in the presence of a proton gradient across the membrane which is generated by electron transport complexes of the respiratory chain. F-type ATPases consist of two structural domains, F(1) - containing the extramembraneous catalytic core, and F(0) - containing the membrane proton channel, linked together by a central stalk and a peripheral stalk. During catalysis, ATP synthesis in the catalytic domain of F(1) is coupled via a rotary mechanism of the central stalk subunits to proton translocation. Subunits alpha and beta form the catalytic core in F(1). Rotation of the central stalk against the surrounding alpha(3)beta(3) subunits leads to hydrolysis of ATP in three separate catalytic sites on the beta subunits. The sequence is that of ATP synthase subunit beta, mitochondrial (ATP2) from Saccharomyces cerevisiae (strain ATCC 204508 / S288c) (Baker's yeast).